A 332-amino-acid chain; its full sequence is Ferredoxin--NADP reductase (332 aa).

Residues E35, Q43, Y48, V88, F122, D286, and S326 each contribute to the FAD site.

It belongs to the ferredoxin--NADP reductase type 2 family. As to quaternary structure, homodimer. The cofactor is FAD.

It carries out the reaction 2 reduced [2Fe-2S]-[ferredoxin] + NADP(+) + H(+) = 2 oxidized [2Fe-2S]-[ferredoxin] + NADPH. The protein is Ferredoxin--NADP reductase of Limosilactobacillus reuteri (strain DSM 20016) (Lactobacillus reuteri).